Consider the following 168-residue polypeptide: Probable chorismate pyruvate-lyase (168 aa).

Residues R75, I114, and E155 each coordinate substrate.

This sequence belongs to the UbiC family.

It is found in the cytoplasm. The enzyme catalyses chorismate = 4-hydroxybenzoate + pyruvate. Its pathway is cofactor biosynthesis; ubiquinone biosynthesis. Removes the pyruvyl group from chorismate, with concomitant aromatization of the ring, to provide 4-hydroxybenzoate (4HB) for the ubiquinone pathway. The sequence is that of Probable chorismate pyruvate-lyase from Psychrobacter cryohalolentis (strain ATCC BAA-1226 / DSM 17306 / VKM B-2378 / K5).